Here is a 112-residue protein sequence, read N- to C-terminus: Large ribosomal subunit protein uL22 (112 aa).

The protein belongs to the universal ribosomal protein uL22 family. As to quaternary structure, part of the 50S ribosomal subunit.

In terms of biological role, this protein binds specifically to 23S rRNA; its binding is stimulated by other ribosomal proteins, e.g. L4, L17, and L20. It is important during the early stages of 50S assembly. It makes multiple contacts with different domains of the 23S rRNA in the assembled 50S subunit and ribosome. Functionally, the globular domain of the protein is located near the polypeptide exit tunnel on the outside of the subunit, while an extended beta-hairpin is found that lines the wall of the exit tunnel in the center of the 70S ribosome. This chain is Large ribosomal subunit protein uL22, found in Legionella pneumophila subsp. pneumophila (strain Philadelphia 1 / ATCC 33152 / DSM 7513).